Reading from the N-terminus, the 128-residue chain is MSSLQRTAPASQAVSLPLEQVKEALGEVLNALQSPTGSARLEEARENSGNDLGKVLQLLLPAAVQIQQEVLQNYGFSADGEGVLRFARLVKSYESQDPEIAAMSSKLKSFFLPPLPLPPHAGLSAPSS.

This sequence belongs to the UPF0456 family.

Its subcellular location is the cytoplasm. This chain is Protein C10, found in Xenopus laevis (African clawed frog).